The sequence spans 391 residues: Elongation factor Tu (391 aa).

The 192-residue stretch at 10 to 201 folds into the tr-type G domain; the sequence is KPHVNIGTIG…AVDDYIPTPA (192 aa). The segment at 19 to 26 is G1; it reads GHVDHGKT. 19–26 contacts GTP; the sequence is GHVDHGKT. Thr-26 serves as a coordination point for Mg(2+). The tract at residues 55–59 is G2; the sequence is GITIS. The interval 76–79 is G3; it reads DCPG. Residues 76–80 and 131–134 each bind GTP; these read DCPGH and NKVD. The segment at 131–134 is G4; it reads NKVD. A G5 region spans residues 169-171; that stretch reads SAL.

This sequence belongs to the TRAFAC class translation factor GTPase superfamily. Classic translation factor GTPase family. EF-Tu/EF-1A subfamily. In terms of assembly, monomer.

It is found in the cytoplasm. The enzyme catalyses GTP + H2O = GDP + phosphate + H(+). GTP hydrolase that promotes the GTP-dependent binding of aminoacyl-tRNA to the A-site of ribosomes during protein biosynthesis. This is Elongation factor Tu from Dinoroseobacter shibae (strain DSM 16493 / NCIMB 14021 / DFL 12).